A 360-amino-acid chain; its full sequence is Nucleoporin SEH1 (360 aa).

WD repeat units follow at residues 10–49 (DHKDLIHDVSFDFHGRRMATCSSDQSVKVWDKSESGDWHC), 55–96 (THSG…SNDK), 111–152 (DSRT…NLSQ), 160–210 (SCKL…RKYA), 217–258 (TVTD…KELT), and 276–315 (NHNSQVWRVSWNITGTVLASSGDDGCVRLWKANYMDNWKC). Lysine 12 participates in a covalent cross-link: Glycyl lysine isopeptide (Lys-Gly) (interchain with G-Cter in SUMO2). Phosphoserine is present on residues serine 179 and serine 190. The segment covering 324–354 (SPVNGSSQQGTSNPSLGSTIPSLQNSLNGSS) has biased composition (polar residues). The disordered stretch occupies residues 324–360 (SPVNGSSQQGTSNPSLGSTIPSLQNSLNGSSAGRKHS).

This sequence belongs to the WD repeat SEC13 family. As to quaternary structure, component of the Nup107-160 subcomplex of the nuclear pore complex (NPC). The Nup107-160 subcomplex includes NUP160, NUP133, NUP107, NUP98, NUP85, NUP43, NUP37, SEH1 and SEC13. The SEH1 subunit appears to be only weakly associated with the Nup107-160 subcomplex. Component of the GATOR2 subcomplex, composed of MIOS, SEC13, SEH1L, WDR24 and WDR59. The GATOR2 complex interacts with CASTOR1 and CASTOR2; the interaction is negatively regulated by arginine. The GATOR2 complex interacts with SESN1, SESN2 and SESN3; the interaction is negatively regulated by amino acids. SESN1, SESN2 and SESN3 convey leucine availability via direct interaction with SEH1L and WDR24.

Its subcellular location is the chromosome. The protein localises to the centromere. It is found in the kinetochore. The protein resides in the nucleus. It localises to the nuclear pore complex. Its subcellular location is the lysosome membrane. Its activity is regulated as follows. The GATOR2 complex is negatively regulated by the upstream amino acid sensors CASTOR1 and SESN2, which sequester the GATOR2 complex in absence of amino acids. In the presence of abundant amino acids, GATOR2 is released from CASTOR1 and SESN2 and activated. Component of the Nup107-160 subcomplex of the nuclear pore complex (NPC). The Nup107-160 subcomplex is required for the assembly of a functional NPC. The Nup107-160 subcomplex is also required for normal kinetochore microtubule attachment, mitotic progression and chromosome segregation. This subunit plays a role in recruitment of the Nup107-160 subcomplex to the kinetochore. In terms of biological role, as a component of the GATOR2 complex, functions as an activator of the amino acid-sensing branch of the mTORC1 signaling pathway. The GATOR2 complex indirectly activates mTORC1 through the inhibition of the GATOR1 subcomplex. GATOR2 probably acts as an E3 ubiquitin-protein ligase toward GATOR1. In the presence of abundant amino acids, the GATOR2 complex mediates ubiquitination of the NPRL2 core component of the GATOR1 complex, leading to GATOR1 inactivation. In the absence of amino acids, GATOR2 is inhibited, activating the GATOR1 complex. Within the GATOR2 complex, SEC13 and SEH1L are required to stabilize the complex. The chain is Nucleoporin SEH1 (SEH1L) from Homo sapiens (Human).